A 324-amino-acid polypeptide reads, in one-letter code: T-cell acute lymphocytic leukemia protein 1 homolog (324 aa).

Residues 1 to 49 form a disordered region; that stretch reads MMEKLKSEQFPLSPSAEGCASPPRGDGDARGKQEGTTAETGEHRLPEEL. Residues 185–237 enclose the bHLH domain; the sequence is VRRIFTNSRERWRQQNVNGAFAELRKLIPTHPPDKKLSKNEILRLAMKYINFL. Residues 276–324 form a disordered region; the sequence is SPNSSCGSLLDGDASPESFTEDQDSSVESRPSARGLHHSSLPLDGNAQR.

As to expression, expressed in hemopoietic and endothelial lineages. Isoform beta emerges first, expressing in the entire anterior and posterior lateral mesoderm (ALM and PLM respectively), and in the ventral wall of the dorsal aorta, where definitive hemopoiesis begins. Isoform alpha expresses later as two pairs of stripes in the PLM and ALM, and becomes restricted to the intermediate cell mass (ICM) by the 18-somite stage. The ICM is the key site of primitive hemopoiesis, giving rise to the erythroid lineage. Also expressed in all stages of endocardial cell migration and in the developing midbrain, hindbrain and spinal cord. In adults, expressed in the main hemopoietic organs, namely the kidney (where isoform alpha is the predominant isoform) and the spleen. Also expressed in the liver, gill and gonads.

Its subcellular location is the nucleus. Transcription factor that plays a pivotal role in hemopoietic and endothelial development, acting synergistically with lmo2 and downstream of clo. Specifies mesodermal precursors to a hemangioblast cell fate. Hemangioblasts are bipotential precursors of blood and endothelium, and in the absence of hemopoietic induction cues such as gata1, tal1/scl-lmo2-induced hemangioblasts differentiate into endothelial cells. Isoform alpha and isoform beta are redundant for the initiation of primitive hemopoiesis but have distinct roles in the regulation of primitive erythroid differentiation and definitive hemopoietic stem cell specification, most likely due to differences in expression levels. Specification of definitive hemopoietic stem cells requires isoform beta. DNA binding is required for erythroid maturation, but not for its other hemopoietic functions. Endothelial roles include development of the dorsal aorta, the site of definitive hemopoiesis in the embryo. Required for angiogenesis but not angioblast specification. Has an additional role in endocardium formation during heart development. May play a role in central nervous system development. This Danio rerio (Zebrafish) protein is T-cell acute lymphocytic leukemia protein 1 homolog.